The sequence spans 166 residues: Specificity protein transcription factor 2 (166 aa).

Residues 17 to 45 are disordered; it reads SYHHSLPSISPPDSPASTSASSSSSSIGA. The segment covering 31–42 has biased composition (low complexity); the sequence is PASTSASSSSSS. C2H2-type zinc fingers lie at residues 77 to 101, 107 to 131, and 137 to 160; these read HLCSVPGCGKTYKKTSHLRAHLRKH, FVCDWFDCGKRFDRSDQLIRHKRTH, and FACKFCIRQFSRSDHLQQHLTSVH.

The protein belongs to the Sp1 C2H2-type zinc-finger protein family.

Functionally, transcription factor. Probably acts downstream of the Wnt signaling pathway. The chain is Specificity protein transcription factor 2 from Caenorhabditis elegans.